A 409-amino-acid polypeptide reads, in one-letter code: PPE family protein PPE32 (409 aa).

Belongs to the mycobacterial PPE family. As to quaternary structure, interacts with host Toll-like receptor 2 (TLR2).

Its subcellular location is the secreted. It localises to the cell wall. The protein resides in the cell surface. In terms of biological role, virulence factor that modulates the production of host cytokines. The chain is PPE family protein PPE32 from Mycobacterium tuberculosis (strain CDC 1551 / Oshkosh).